We begin with the raw amino-acid sequence, 632 residues long: Polygalacturonase non-catalytic subunit AroGP3 (632 aa).

Positions 1 to 27 (MHTKILLPSCILLLLLFTLSSLDVVVA) are cleaved as a signal peptide. The propeptide occupies 28–109 (KDGDESGNPF…MCALDLLPSL (82 aa)). N-linked (GlcNAc...) asparagine glycosylation is found at Asn125, Asn143, Asn258, Asn280, Asn336, Asn371, and Asn389. Residues 417-631 (FFREKMLKSG…FENDMTWATA (215 aa)) form the BURP domain.

As to quaternary structure, interacts with polygalacturonase to form heterodimers.

Its subcellular location is the secreted. The protein resides in the extracellular space. It is found in the apoplast. The protein localises to the cell wall. Functionally, non-catalytic subunit of polygalacturonase. The protein is Polygalacturonase non-catalytic subunit AroGP3 (GP3) of Solanum lycopersicum (Tomato).